The following is a 293-amino-acid chain: Large ribosomal subunit protein uL4c (293 aa).

The N-terminal 50 residues, 1–50 (MATSTSSSLSLSFFSSSLFSSKSRNFSSKPILKLPSSSHSQTSLSLSIKS), are a transit peptide targeting the chloroplast. Disordered regions lie at residues 107–138 (EVRGGGRKPYPQKKTGRARRGSQGSPLRPGGG) and 259–293 (YGVDTLEDEDEEEEEEEEGEEVDDGVEDGTPEPAE). Basic residues predominate over residues 116-126 (YPQKKTGRARR). The span at 263–293 (TLEDEDEEEEEEEEGEEVDDGVEDGTPEPAE) shows a compositional bias: acidic residues.

The protein belongs to the universal ribosomal protein uL4 family. In terms of assembly, component of the chloroplast large ribosomal subunit (LSU). Mature 70S chloroplast ribosomes of higher plants consist of a small (30S) and a large (50S) subunit. The 30S small subunit contains 1 molecule of ribosomal RNA (16S rRNA) and 24 different proteins. The 50S large subunit contains 3 rRNA molecules (23S, 5S and 4.5S rRNA) and 33 different proteins. Highly expressed in cotyledon and weakly in roots.

The protein resides in the plastid. It localises to the chloroplast. Component of the chloroplast ribosome (chloro-ribosome), a dedicated translation machinery responsible for the synthesis of chloroplast genome-encoded proteins, including proteins of the transcription and translation machinery and components of the photosynthetic apparatus. The chain is Large ribosomal subunit protein uL4c (RPL4) from Spinacia oleracea (Spinach).